Consider the following 798-residue polypeptide: MNLEIKHAILVLWIFLQVQGIKDTSTKTHSSGTKNIDKAPRIETTESTSAVHKASTMKRLFAVAKLRNKRSALFPAVNICPRESLRQILESLQEYYRLRVCQEIVWEAYRIFLDRVPDTEEYQDWVSLCQKETFCLFDIGKNFSNSQEHLDLLQQRIFQRSFSGRKDDMSPIEILGVPTTAPVLPIDVSSMSLRPFPLPPDDTDLKEVTIKDIQTPIAIRRAELESKPEPTHVTEISSEEKVEFSISLPNHRFKAELTNSRSPYYQELVGQSQLQLQKIFKKLPGFGEIRVLGFRPKKEEDGSSSTEIQLMAIFKRDHAESKGPESDLLSLDSNKIERERIHHGAIEDKQPEAYLTAADLKKLIIRLLDGDQPLVGGTVPFSDEVTEPLFRPVTQSELPKPLTDVTEDVTLSPELPFSEPRLESVDIYGPYLPDSSWSRPVTASTSGVGNLPSFTPSIFALDDQSSPPLMATGPTAFIPTLTLPISDYSTVRQWPLEVSHWPESSSDRELSTTSSHDTIRDLDEMDVSDTPALSEIAELSGYDSAPDRFLEMTTPIPTLQYVTXSSETIAAKGHELVVFFSLRVANMPFSYDLFNKSSLEYQALEQRFTDLLVPYLRSNLTGFKQLEILSFRNGSVIVNSKVRFAKAVPYNLTQAVRGVLEDLRSTAAQELNLEIESYSLDIEPADQADPCKFLDCGKFAQCIKNELTEEAECRCRQGHESHGTLEYQELNLCPPGKTCEASQGQATPCRPPDHSTNQARQPSVKKLQRQQNKVVKKRNSELSATDFEELDDQDWEGN.

The N-terminal stretch at 1–20 (MNLEIKHAILVLWIFLQVQG) is a signal peptide. N-linked (GlcNAc...) asparagine glycosylation is present at N142. One can recognise an SEA 1 domain in the interval 238–360 (SEEKVEFSIS…PEAYLTAADL (123 aa)). 2 O-linked (GalNAc...) threonine glycosylation sites follow: T442 and T445. Residues 574 to 687 (HELVVFFSLR…YSLDIEPADQ (114 aa)) enclose the SEA 2 domain. N-linked (GlcNAc...) asparagine glycans are attached at residues N595 and N619. The short motif at 624–632 (KQLEILSFR) is the Heparin- and hyaluronan-binding element. Residues N633 and N651 are each glycosylated (N-linked (GlcNAc...) asparagine). The interval 741–798 (ASQGQATPCRPPDHSTNQARQPSVKKLQRQQNKVVKKRNSELSATDFEELDDQDWEGN) is disordered. A compositionally biased stretch (acidic residues) spans 786–798 (DFEELDDQDWEGN).

In terms of processing, highly glycosylated (N- and O-linked carbohydrates and sialic acid).

The protein resides in the cell projection. The protein localises to the cilium. It is found in the photoreceptor outer segment. It localises to the secreted. Its subcellular location is the extracellular space. The protein resides in the extracellular matrix. The protein localises to the interphotoreceptor matrix. It is found in the photoreceptor inner segment. Functionally, chondroitin sulfate-, heparin- and hyaluronan-binding protein. May serve to form a basic macromolecular scaffold comprising the insoluble interphotoreceptor matrix. The polypeptide is Interphotoreceptor matrix proteoglycan 1 (Rattus norvegicus (Rat)).